We begin with the raw amino-acid sequence, 962 residues long: Protease 3 (962 aa).

A signal peptide spans 1-23 (MPRSTWFKALLLFVALWAPLSQA). Residue histidine 88 coordinates Zn(2+). The Proton acceptor role is filled by glutamate 91. Histidine 92 and glutamate 169 together coordinate Zn(2+).

Belongs to the peptidase M16 family. In terms of assembly, monomer. It depends on Zn(2+) as a cofactor.

The protein localises to the periplasm. The catalysed reaction is Preferential cleavage of 16-Tyr-|-Leu-17 and 25-Phe-|-Tyr-26 bonds of oxidized insulin B chain. Also acts on other substrates of Mw less than 7 kDa such as insulin and glucagon.. Endopeptidase that degrades small peptides of less than 7 kDa, such as glucagon and insulin. This chain is Protease 3 (ptrA), found in Shigella flexneri.